Here is a 170-residue protein sequence, read N- to C-terminus: Adenine phosphoribosyltransferase (170 aa).

Belongs to the purine/pyrimidine phosphoribosyltransferase family. As to quaternary structure, homodimer.

The protein resides in the cytoplasm. It catalyses the reaction AMP + diphosphate = 5-phospho-alpha-D-ribose 1-diphosphate + adenine. It participates in purine metabolism; AMP biosynthesis via salvage pathway; AMP from adenine: step 1/1. Functionally, catalyzes a salvage reaction resulting in the formation of AMP, that is energically less costly than de novo synthesis. This is Adenine phosphoribosyltransferase from Bacillus mycoides (strain KBAB4) (Bacillus weihenstephanensis).